A 304-amino-acid polypeptide reads, in one-letter code: Capsid protein (304 aa).

2 stretches are compositionally biased toward basic and acidic residues: residues 1–24 and 32–54; these read MGDSTKKAETAKDVGTSQEKREAR and FEGKDTSEDTDGRAADADGEMSL. A disordered region spans residues 1 to 54; that stretch reads MGDSTKKAETAKDVGTSQEKREARPLPTAADFEGKDTSEDTDGRAADADGEMSL.

It belongs to the potexviruses coat protein family.

Its subcellular location is the virion. Its function is as follows. Required for genome encapsidation. Forms ribonucleoprotein complexes along with TGB1 helicase and viral RNA. This is Capsid protein from Potato virus M (strain German) (PVM).